A 180-amino-acid polypeptide reads, in one-letter code: Superoxide dismutase [Cu-Zn] (180 aa).

The N-terminal stretch at 1 to 19 is a signal peptide; sequence MFMNLLSQVSNAIFPQVEA. His68, His70, and His85 together coordinate Cu cation. Cys79 and Cys171 are disulfide-bonded. Residues His85, His93, His102, and Asp105 each coordinate Zn(2+). Residue His142 coordinates Cu cation.

The protein belongs to the Cu-Zn superoxide dismutase family. In terms of assembly, homodimer. Cu cation is required as a cofactor. The cofactor is Zn(2+).

It localises to the cytoplasm. It catalyses the reaction 2 superoxide + 2 H(+) = H2O2 + O2. Its function is as follows. Destroys radicals which are normally produced within the cells and which are toxic to biological systems. Required for normal brood size. May be involved in regulating mpk-1 phosphorylation downstream of phosphatase ptp-2 during oocyte maturation. This chain is Superoxide dismutase [Cu-Zn], found in Caenorhabditis briggsae.